The sequence spans 891 residues: Alanine--tRNA ligase (891 aa).

Zn(2+) contacts are provided by His564, His568, Cys678, and His682.

This sequence belongs to the class-II aminoacyl-tRNA synthetase family. Zn(2+) serves as cofactor.

It localises to the cytoplasm. The enzyme catalyses tRNA(Ala) + L-alanine + ATP = L-alanyl-tRNA(Ala) + AMP + diphosphate. Functionally, catalyzes the attachment of alanine to tRNA(Ala) in a two-step reaction: alanine is first activated by ATP to form Ala-AMP and then transferred to the acceptor end of tRNA(Ala). Also edits incorrectly charged Ser-tRNA(Ala) and Gly-tRNA(Ala) via its editing domain. The sequence is that of Alanine--tRNA ligase from Nitrobacter winogradskyi (strain ATCC 25391 / DSM 10237 / CIP 104748 / NCIMB 11846 / Nb-255).